Consider the following 199-residue polypeptide: N-(5'-phosphoribosyl)anthranilate isomerase (199 aa).

Belongs to the TrpF family.

The enzyme catalyses N-(5-phospho-beta-D-ribosyl)anthranilate = 1-(2-carboxyphenylamino)-1-deoxy-D-ribulose 5-phosphate. Its pathway is amino-acid biosynthesis; L-tryptophan biosynthesis; L-tryptophan from chorismate: step 3/5. In Streptococcus pneumoniae serotype 19F (strain G54), this protein is N-(5'-phosphoribosyl)anthranilate isomerase.